Consider the following 759-residue polypeptide: Arylphorin subunit A4 (759 aa).

Positions 1–16 (MKIAIVLLAIIALVAA) are cleaved as a signal peptide.

Belongs to the hemocyanin family. Heterohexamer. As to expression, fat body.

It localises to the secreted. Its subcellular location is the extracellular space. Functionally, arylphorin is a larval storage protein (LSP) which may serve as a storage protein used primarily as a source of aromatic amino acids for protein synthesis during metamorphosis. It is a constituent of the sclerotizing system of the cuticle, and serves as a carrier for ecdysteroid hormone. This chain is Arylphorin subunit A4, found in Calliphora vicina (Blue blowfly).